Reading from the N-terminus, the 161-residue chain is Peptidyl-prolyl cis-trans isomerase-like 3 (161 aa).

Position 2 is an N-acetylserine (Ser2). The PPIase cyclophilin-type domain maps to 2-154 (SVTLHTDVGD…NDVHIKDITI (153 aa)). Position 61 is an omega-N-methylarginine (Arg61).

It belongs to the cyclophilin-type PPIase family. PPIL3 subfamily. Identified in the spliceosome C complex. As to expression, ubiquitous. Detected at low levels.

It catalyses the reaction [protein]-peptidylproline (omega=180) = [protein]-peptidylproline (omega=0). PPIases accelerate the folding of proteins. It catalyzes the cis-trans isomerization of proline imidic peptide bonds in oligopeptides. May be involved in pre-mRNA splicing. This Homo sapiens (Human) protein is Peptidyl-prolyl cis-trans isomerase-like 3 (PPIL3).